The primary structure comprises 1044 residues: Pre-mRNA-splicing factor ATP-dependent RNA helicase DEAH1 (1044 aa).

A disordered region spans residues 106-206 (EVVVEKKSSV…TLSKKEKEEA (101 aa)). Residues 108–121 (VVEKKSSVSESRKS) are compositionally biased toward basic and acidic residues. Over residues 122-132 (DKGKKRFRKKS) the composition is skewed to basic residues. Phosphoserine occurs at positions 135 and 138. Positions 157–166 (EEDDGSESEE) are enriched in acidic residues. A compositionally biased stretch (basic and acidic residues) spans 167–206 (ERVRDQKEREELEQHLKDRDTARTRKLTEQTLSKKEKEEA). In terms of domain architecture, Helicase ATP-binding spans 414-577 (LKAVEEHQVL…FDTAPIFSFP (164 aa)). An ATP-binding site is contributed by 427–434 (GDTGSGKT). The short motif at 524-527 (DEAH) is the DEAH box element. Residues 600–775 (IVTILTIHVR…SVVLALKSLG (176 aa)) form the Helicase C-terminal domain.

The protein belongs to the DEAD box helicase family. DEAH subfamily. PRP2 sub-subfamily. In terms of tissue distribution, widely expressed.

It carries out the reaction ATP + H2O = ADP + phosphate + H(+). Functionally, involved in pre-mRNA splicing. The protein is Pre-mRNA-splicing factor ATP-dependent RNA helicase DEAH1 of Arabidopsis thaliana (Mouse-ear cress).